Consider the following 388-residue polypeptide: tRNA (guanine(26)-N(2))-dimethyltransferase (388 aa).

The Trm1 methyltransferase domain occupies 4 to 383 (RTIVEGTTKI…APIAEIKKII (380 aa)). Arg-41, Arg-78, Asp-94, and Ala-123 together coordinate S-adenosyl-L-methionine. Cys-251, Cys-254, Cys-271, and Cys-274 together coordinate Zn(2+).

This sequence belongs to the class I-like SAM-binding methyltransferase superfamily. Trm1 family.

The enzyme catalyses guanosine(26) in tRNA + 2 S-adenosyl-L-methionine = N(2)-dimethylguanosine(26) in tRNA + 2 S-adenosyl-L-homocysteine + 2 H(+). Its function is as follows. Dimethylates a single guanine residue at position 26 of a number of tRNAs using S-adenosyl-L-methionine as donor of the methyl groups. This is tRNA (guanine(26)-N(2))-dimethyltransferase from Methanosarcina mazei (strain ATCC BAA-159 / DSM 3647 / Goe1 / Go1 / JCM 11833 / OCM 88) (Methanosarcina frisia).